A 110-amino-acid polypeptide reads, in one-letter code: Membrane-associated protein slr1513 (110 aa).

The protein localises to the cellular thylakoid membrane. Its subcellular location is the cell membrane. This is Membrane-associated protein slr1513 from Synechocystis sp. (strain ATCC 27184 / PCC 6803 / Kazusa).